The following is a 161-amino-acid chain: Protein-export protein SecB (161 aa).

The protein belongs to the SecB family. Homotetramer, a dimer of dimers. One homotetramer interacts with 1 SecA dimer.

Its subcellular location is the cytoplasm. Functionally, one of the proteins required for the normal export of preproteins out of the cell cytoplasm. It is a molecular chaperone that binds to a subset of precursor proteins, maintaining them in a translocation-competent state. It also specifically binds to its receptor SecA. The polypeptide is Protein-export protein SecB (Shewanella pealeana (strain ATCC 700345 / ANG-SQ1)).